A 787-amino-acid polypeptide reads, in one-letter code: Phenylalanine--tRNA ligase beta subunit (787 aa).

The 111-residue stretch at A39–R149 folds into the tRNA-binding domain. The region spanning P400–D475 is the B5 domain. Residues D453, D459, E462, and E463 each coordinate Mg(2+). An FDX-ACB domain is found at S694–R786.

The protein belongs to the phenylalanyl-tRNA synthetase beta subunit family. Type 1 subfamily. Tetramer of two alpha and two beta subunits. The cofactor is Mg(2+).

Its subcellular location is the cytoplasm. It catalyses the reaction tRNA(Phe) + L-phenylalanine + ATP = L-phenylalanyl-tRNA(Phe) + AMP + diphosphate + H(+). This chain is Phenylalanine--tRNA ligase beta subunit (pheT), found in Neisseria meningitidis serogroup B (strain ATCC BAA-335 / MC58).